The chain runs to 219 residues: Small ribosomal subunit protein uS3c (219 aa).

In terms of domain architecture, KH type-2 spans 43 to 120; sequence IQNYIQKNMQ…KINITITKIT (78 aa).

Belongs to the universal ribosomal protein uS3 family. Part of the 30S ribosomal subunit.

Its subcellular location is the plastid. The protein localises to the chloroplast. The sequence is that of Small ribosomal subunit protein uS3c (rps3) from Oenothera elata subsp. hookeri (Hooker's evening primrose).